Here is a 264-residue protein sequence, read N- to C-terminus: uncharacterized protein (264 aa).

The N-terminal stretch at 1–26 is a signal peptide; the sequence is MMKKLFHSTLIVLLFFSFFGVQPIHA.

This is an uncharacterized protein from Bacillus subtilis (strain 168).